Reading from the N-terminus, the 448-residue chain is Histidine--tRNA ligase (448 aa).

2 disordered regions span residues 1–20 (MAIK…SPKL) and 428–448 (AGQA…QEKA).

This sequence belongs to the class-II aminoacyl-tRNA synthetase family. Homodimer.

It localises to the cytoplasm. It carries out the reaction tRNA(His) + L-histidine + ATP = L-histidyl-tRNA(His) + AMP + diphosphate + H(+). This chain is Histidine--tRNA ligase, found in Deinococcus deserti (strain DSM 17065 / CIP 109153 / LMG 22923 / VCD115).